Consider the following 579-residue polypeptide: Acyl-coenzyme A synthetase ACSM5, mitochondrial (579 aa).

Residues 1 to 26 constitute a mitochondrion transit peptide; that stretch reads MRPWLRHLVLQALRNSRAFCGSHGKP. N6-acetyllysine; alternate is present on Lys97. The residue at position 97 (Lys97) is an N6-succinyllysine; alternate. The residue at position 152 (Lys152) is an N6-acetyllysine. 230-238 serves as a coordination point for ATP; it reads TSGTTGAPK. Lys303 is modified (N6-acetyllysine; alternate). Residue Lys303 is modified to N6-succinyllysine; alternate. Residues 368 to 373, Asp455, Arg470, and Lys566 each bind ATP; that span reads EGYGQS.

It belongs to the ATP-dependent AMP-binding enzyme family. Mg(2+) is required as a cofactor. Requires Mn(2+) as cofactor. As to expression, detected in kidney and liver.

The protein localises to the mitochondrion matrix. The enzyme catalyses a medium-chain fatty acid + ATP + CoA = a medium-chain fatty acyl-CoA + AMP + diphosphate. In terms of biological role, catalyzes the activation of fatty acids by CoA to produce an acyl-CoA, the first step in fatty acid metabolism. The protein is Acyl-coenzyme A synthetase ACSM5, mitochondrial (ACSM5) of Homo sapiens (Human).